A 412-amino-acid polypeptide reads, in one-letter code: Squamosa promoter-binding-like protein 2 (412 aa).

The disordered stretch occupies residues 1 to 81 (MDWDAKMPSW…AAAAGKRARA (81 aa)). The span at 18-31 (PSGGGGGGGGGGGA) shows a compositional bias: gly residues. 2 stretches are compositionally biased toward low complexity: residues 48 to 57 (VSAASAAPAA) and 67 to 81 (SSSSSAAAAGKRARA). An SBP-type zinc finger spans residues 89–167 (VPACSVEGCA…DGHNKRRRKP (79 aa)). Zn(2+) is bound by residues Cys-92, Cys-97, Cys-115, His-118, Cys-134, Cys-137, His-141, and Cys-153. The Bipartite nuclear localization signal motif lies at 150–166 (KRSCRKRLDGHNKRRRK).

Expressed in stems, leaf sheaths, and young panicles.

The protein localises to the nucleus. Functionally, trans-acting factor that binds specifically to the consensus nucleotide sequence 5'-TNCGTACAA-3'. May be involved in panicle development. This is Squamosa promoter-binding-like protein 2 (SPL2) from Oryza sativa subsp. japonica (Rice).